The following is a 708-amino-acid chain: DNA-directed RNA polymerase III subunit RPC5 (708 aa).

Residues aspartate 146–alanine 155 show a composition bias toward basic and acidic residues. The segment at aspartate 146–valine 170 is disordered. Phosphoserine is present on residues serine 161 and serine 162. Lysine 171 participates in a covalent cross-link: Glycyl lysine isopeptide (Lys-Gly) (interchain with G-Cter in SUMO2). Serine 192 is subject to Phosphoserine. A Phosphotyrosine modification is found at tyrosine 224. A Glycyl lysine isopeptide (Lys-Gly) (interchain with G-Cter in SUMO2) cross-link involves residue lysine 432. Residues glutamine 485–glycine 552 form a disordered region. Lysine 498 is covalently cross-linked (Glycyl lysine isopeptide (Lys-Gly) (interchain with G-Cter in SUMO1); alternate). Lysine 498 is covalently cross-linked (Glycyl lysine isopeptide (Lys-Gly) (interchain with G-Cter in SUMO2); alternate). The segment covering valine 502 to methionine 519 has biased composition (acidic residues). Phosphoserine is present on residues serine 503 and serine 522. The segment at threonine 556 to serine 708 is required for Pol III complex stability. A Glycyl lysine isopeptide (Lys-Gly) (interchain with G-Cter in SUMO2) cross-link involves residue lysine 659.

As to quaternary structure, component of the RNA polymerase III complex consisting of at least 17 subunits: a ten-subunit horseshoe-shaped catalytic core composed of POLR3A/RPC1, POLR3B/RPC2, POLR1C/RPAC1, POLR1D/RPAC2, POLR3K/RPC10, POLR2E/RPABC1, POLR2F/RPABC2, POLR2H/RPABC3, POLR2K/RPABC4 and POLR2L/RPABC5; the stalk composed of two subunits POLR3H/RPC8 and CRCP/RPC9, forming a structural mobile part that protrudes out of the core and functions primarily in transcription initiation; and additional subunits homologous to general transcription factors of the RNA polymerase II machinery, POLR3D/RPC4-POLR3E/RPC5 heterodimer and POLR3/CRPC3-POLR3F/RPC6-POLR3G/RPC7 heterotrimer.

Its subcellular location is the nucleus. Functionally, DNA-dependent RNA polymerase catalyzes the transcription of DNA into RNA using the four ribonucleoside triphosphates as substrates. Specific peripheric component of RNA polymerase III (Pol III) which synthesizes small non-coding RNAs including 5S rRNA, snRNAs, tRNAs and miRNAs from at least 500 distinct genomic loci. Assembles with POLR3D/RPC4 forming a subcomplex that binds the Pol III core. Enables recruitment of Pol III at transcription initiation site and drives transcription initiation from both type 2 and type 3 DNA promoters. Required for efficient transcription termination and reinitiation. Plays a key role in sensing and limiting infection by intracellular bacteria and DNA viruses. Acts as a nuclear and cytosolic DNA sensor involved in innate immune response. Can sense non-self dsDNA that serves as template for transcription into dsRNA. The non-self RNA polymerase III transcripts, such as Epstein-Barr virus-encoded RNAs (EBERs) induce type I interferon and NF-kappa-B through the RIG-I pathway. The chain is DNA-directed RNA polymerase III subunit RPC5 from Homo sapiens (Human).